The sequence spans 174 residues: Shikimate kinase 2 (174 aa).

12–17 (GCGKTT) is an ATP binding site. The Mg(2+) site is built by Thr16 and Asp32. Substrate-binding residues include Asp34, Arg58, and Gly79. The interval 112–126 (RAYPEDDQRPSLTGK) is LID domain. Residue Arg120 participates in ATP binding. Arg139 contacts substrate. An ATP-binding site is contributed by Gln155.

It belongs to the shikimate kinase family. AroL subfamily. Monomer. It depends on Mg(2+) as a cofactor.

It localises to the cytoplasm. The catalysed reaction is shikimate + ATP = 3-phosphoshikimate + ADP + H(+). The protein operates within metabolic intermediate biosynthesis; chorismate biosynthesis; chorismate from D-erythrose 4-phosphate and phosphoenolpyruvate: step 5/7. In terms of biological role, catalyzes the specific phosphorylation of the 3-hydroxyl group of shikimic acid using ATP as a cosubstrate. The protein is Shikimate kinase 2 of Sodalis glossinidius (strain morsitans).